We begin with the raw amino-acid sequence, 107 residues long: Biphenyl 2,3-dioxygenase, ferredoxin component (107 aa).

Positions 4–99 (TKICSSGDLA…VKLEGDDVLV (96 aa)) constitute a Rieske domain. Residues Cys43, His45, Cys62, and His65 each contribute to the [2Fe-2S] cluster site.

Belongs to the bacterial ring-hydroxylating dioxygenase ferredoxin component family. As to quaternary structure, the multicomponent biphenyl dioxygenase system is composed of a ferredoxin reductase (BphA4), a ferredoxin (BphA3), and a terminal oxygenase (BphA1A2). It depends on [2Fe-2S] cluster as a cofactor.

It functions in the pathway xenobiotic degradation; biphenyl degradation. Ferredoxin component of the biphenyl dioxygenase system that catalyzes the stereospecific dihydroxylation of the aromatic ring of biphenyl, yielding a dihydrodiol compound. Is likely involved in biphenyl degradation that allows growth of Rhodococcus sp. strain RHA1 on biphenyl as the sole source of carbon and energy. The dioxygenase system can also use naphtalene and 4-chlorobiphenyl (4-CB) as substrates, as well as some polychlorinated biphenyls (PCB) such as 2,2'-dichlorobiphenyl, 2,3-dichlorobiphenyl and 2,5,2'-trichlorobiphenyl. It exhibits weak activity toward dibenzofuran and dibenzo-p-dioxin. Electrons are transferred from NADH to the [2Fe-2S] cluster in BphA1 via FAD of BphA4 and [2Fe-2S] cluster of BphA3. In Rhodococcus jostii (strain RHA1), this protein is Biphenyl 2,3-dioxygenase, ferredoxin component.